The primary structure comprises 542 residues: CTP synthase (542 aa).

The interval 1–265 (MTRYIFVTGG…DDFVVERFGL (265 aa)) is amidoligase domain. Ser-13 contacts CTP. UTP is bound at residue Ser-13. ATP contacts are provided by residues 14–19 (SLGKGI) and Asp-71. Mg(2+) is bound by residues Asp-71 and Glu-139. CTP is bound by residues 146-148 (DIE), 186-191 (KTKPTQ), and Lys-222. Residues 186–191 (KTKPTQ) and Lys-222 each bind UTP. The 252-residue stretch at 290–541 (TIAMVGKYME…VKAALAQKNK (252 aa)) folds into the Glutamine amidotransferase type-1 domain. Residue Gly-351 participates in L-glutamine binding. Cys-378 acts as the Nucleophile; for glutamine hydrolysis in catalysis. L-glutamine contacts are provided by residues 379 to 382 (LGMQ), Glu-402, and Arg-469. Residues His-514 and Glu-516 contribute to the active site.

This sequence belongs to the CTP synthase family. Homotetramer.

It carries out the reaction UTP + L-glutamine + ATP + H2O = CTP + L-glutamate + ADP + phosphate + 2 H(+). The enzyme catalyses L-glutamine + H2O = L-glutamate + NH4(+). It catalyses the reaction UTP + NH4(+) + ATP = CTP + ADP + phosphate + 2 H(+). It functions in the pathway pyrimidine metabolism; CTP biosynthesis via de novo pathway; CTP from UDP: step 2/2. With respect to regulation, allosterically activated by GTP, when glutamine is the substrate; GTP has no effect on the reaction when ammonia is the substrate. The allosteric effector GTP functions by stabilizing the protein conformation that binds the tetrahedral intermediate(s) formed during glutamine hydrolysis. Inhibited by the product CTP, via allosteric rather than competitive inhibition. Catalyzes the ATP-dependent amination of UTP to CTP with either L-glutamine or ammonia as the source of nitrogen. Regulates intracellular CTP levels through interactions with the four ribonucleotide triphosphates. This is CTP synthase from Pseudomonas putida (strain ATCC 700007 / DSM 6899 / JCM 31910 / BCRC 17059 / LMG 24140 / F1).